Consider the following 213-residue polypeptide: MSVEEVSKKFEENVSVDDTTATPKTVLSDSAHFDVKHPLNTKWTLWYTKPAVDKSESWSDLLRPVTSFQTVEEFWAIIQNIPEPHELPLKSDYHVFRNDVRPEWEDEANAKGGKWSFQLRGKGADIDELWLRTLLAVIGETIDEDDSQINGVVLSIRKGGNKFALWTKSEDKEPLLRIGGKFKQVLKLTDDGHLEFFPHSSANGRHPQPSITL.

Serine 2 and serine 15 each carry phosphoserine; by CK2. Position 22 is a phosphothreonine (threonine 22). Residues serine 28 and serine 30 each carry the phosphoserine modification. Lysine 114 is covalently cross-linked (Glycyl lysine isopeptide (Lys-Gly) (interchain with G-Cter in ubiquitin)).

Belongs to the eukaryotic initiation factor 4E family. As to quaternary structure, component of the eIF4F complex, which composition varies with external and internal environmental conditions. It is composed of at least eIF4A (TIF1/TIF2), eIF4E (TIF45) and eIF4G (TIF4631 or TIF4632). Interacts with PAT1 in a RNA-dependent manner. eIF4E is also known to interact with other partners.

It localises to the cytoplasm. Its subcellular location is the nucleus. Recognizes and binds the 7-methylguanosine (m7G)-containing mRNA cap during an early step in the initiation of protein synthesis and facilitates ribosome binding by inducing the unwinding of the mRNAs secondary structures. This is Eukaryotic translation initiation factor 4E (CDC33) from Saccharomyces cerevisiae (strain ATCC 204508 / S288c) (Baker's yeast).